The following is a 1336-amino-acid chain: Glutamate receptor ionotropic, NMDA 2D (1336 aa).

Residues 1-27 (MRGAGGPRGPRGPAKMLLLLALACASP) form the signal peptide. Residues 28 to 582 (FPEEAPGPGG…SPSAFLEPYS (555 aa)) lie on the Extracellular side of the membrane. The N-linked (GlcNAc...) asparagine glycan is linked to asparagine 92. The cysteines at positions 104 and 348 are disulfide-linked. N-linked (GlcNAc...) asparagine glycosylation is found at asparagine 352, asparagine 366, asparagine 384, and asparagine 467. 2 cysteine pairs are disulfide-bonded: cysteine 455–cysteine 483 and cysteine 462–cysteine 484. Positions 539, 541, and 546 each coordinate L-glutamate. N-linked (GlcNAc...) asparagine glycosylation occurs at asparagine 569. A helical membrane pass occupies residues 583 to 604 (PAVWVMMFVMCLTVVAVTVFIF). The Cytoplasmic segment spans residues 605-629 (EYLSPVGYNRSLATGKRPGGSTFTI). Positions 630 to 641 (GKSIWLLWALVF) form an intramembrane region, discontinuously helical. Positions 631 to 650 (KSIWLLWALVFNNSVPVENP) are pore-forming. The Cytoplasmic segment spans residues 642–653 (NNSVPVENPRGT). The chain crosses the membrane as a helical span at residues 654–674 (TSKIMVLVWAFFAVIFLASYT). Residues 675-843 (ANLAAFMIQE…EVMSSKLDID (169 aa)) lie on the Extracellular side of the membrane. Residues serine 717, threonine 718, and aspartate 759 each coordinate L-glutamate. Cysteines 773 and 828 form a disulfide. A helical membrane pass occupies residues 844–867 (NMAGVFYMLLVAMGLSLLVFAWEH). The Cytoplasmic segment spans residues 868–1336 (LVYWRLRHCL…AHFSSLESEV (469 aa)). Disordered stretches follow at residues 900–934 (EAAP…PFVP), 981–1123 (RAAP…SLGG), and 1225–1336 (RCGC…ESEV). Positions 902–932 (APPPAKPPPPPQPLPSPAYPAPRPAPGPAPF) are enriched in pro residues. Residues 981-991 (RAAPRGAAGRP) show a composition bias toward low complexity. Residues 992–1006 (LSPPAAQPPQKPPPS) show a composition bias toward pro residues. The span at 1035-1044 (AAAATAVGPP) shows a compositional bias: low complexity. A compositionally biased stretch (gly residues) spans 1074–1089 (PGAGGAGGTGGAGGGA). Pro residues predominate over residues 1091–1104 (AAPPPCRAAPPPCP). Over residues 1225–1240 (RCGCPRSHPHRPRASH) the composition is skewed to basic residues. Residue arginine 1316 is modified to Omega-N-methylarginine. Serine 1326 is modified (phosphoserine). A PDZ-binding motif is present at residues 1334-1336 (SEV).

Belongs to the glutamate-gated ion channel (TC 1.A.10.1) family. NR2D/GRIN2D subfamily. Heterotetramer. Forms heterotetrameric channels composed of two GluN1/zeta subunits (GRIN1), and two identical GluN2/epsilon subunits (GRIN2A, GRIN2B, GRIN2C or GRIN2D) or GluN3 subunits (GRIN3A or GRIN3B) (in vitro). In vivo, the subunit composition may depend on the expression levels of the different subunits. Interacts with PDZ domains of PATJ and DLG4.

The protein resides in the cell membrane. It localises to the postsynaptic cell membrane. The catalysed reaction is Ca(2+)(in) = Ca(2+)(out). It catalyses the reaction Na(+)(in) = Na(+)(out). It carries out the reaction K(+)(in) = K(+)(out). In terms of biological role, component of N-methyl-D-aspartate (NMDA) receptors (NMDARs) that function as heterotetrameric, ligand-gated cation channels with high calcium permeability and voltage-dependent block by Mg(2+). Participates in synaptic plasticity for learning and memory formation. Channel activation requires binding of the neurotransmitter L-glutamate to the GluN2 subunit, glycine or D-serine binding to the GluN1 subunit, plus membrane depolarization to eliminate channel inhibition by Mg(2+). NMDARs mediate simultaneously the potasium efflux and the influx of calcium and sodium. Each GluN2 subunit confers differential attributes to channel properties, including activation, deactivation and desensitization kinetics, pH sensitivity, Ca2(+) permeability, and binding to allosteric modulators. The protein is Glutamate receptor ionotropic, NMDA 2D of Homo sapiens (Human).